Consider the following 245-residue polypeptide: 1-(5-phosphoribosyl)-5-[(5-phosphoribosylamino)methylideneamino] imidazole-4-carboxamide isomerase (245 aa).

Asp7 (proton acceptor) is an active-site residue. The Proton donor role is filled by Asp129.

Belongs to the HisA/HisF family.

It localises to the cytoplasm. The catalysed reaction is 1-(5-phospho-beta-D-ribosyl)-5-[(5-phospho-beta-D-ribosylamino)methylideneamino]imidazole-4-carboxamide = 5-[(5-phospho-1-deoxy-D-ribulos-1-ylimino)methylamino]-1-(5-phospho-beta-D-ribosyl)imidazole-4-carboxamide. Its pathway is amino-acid biosynthesis; L-histidine biosynthesis; L-histidine from 5-phospho-alpha-D-ribose 1-diphosphate: step 4/9. This Escherichia coli O17:K52:H18 (strain UMN026 / ExPEC) protein is 1-(5-phosphoribosyl)-5-[(5-phosphoribosylamino)methylideneamino] imidazole-4-carboxamide isomerase.